The sequence spans 410 residues: MRCAPTAGAALVLCAATAGLLSAQGRPAQPEPPRFASWDEMNLLAHGLLQLGHGLREHVERTRGQLGALERRMAACGNACQGPKGKDAPFKDSEDRVPEGQTPETLQSLQTQLKAQNSKIQQLFQKVAQQQRYLSKQNLRIQNLQSQIDLLAPTHLDNGVDKTSRGKRLPKMTQLIGLTPNATHLHRPPRDCQELFQEGERHSGLFQIQPLGSPPFLVNCEMTSDGGWTVIQRRLNGSVDFNQSWEAYKDGFGDPQGEFWLGLEKMHSITGNRGSQLAVQLQDWDGNAKLLQFPIHLGGEDTAYSLQLTEPTANELGATNVSPNGLSLPFSTWDQDHDLRGDLNCAKSLSGGWWFGTCSHSNLNGQYFHSIPRQRQERKKGIFWKTWKGRYYPLQATTLLIQPMEATAAS.

Positions 1–23 (MRCAPTAGAALVLCAATAGLLSA) are cleaved as a signal peptide. Residues 79 to 101 (ACQGPKGKDAPFKDSEDRVPEGQ) form a disordered region. Over residues 84-98 (KGKDAPFKDSEDRVP) the composition is skewed to basic and acidic residues. The stretch at 104–152 (ETLQSLQTQLKAQNSKIQQLFQKVAQQQRYLSKQNLRIQNLQSQIDLLA) forms a coiled coil. A glycan (N-linked (GlcNAc...) asparagine) is linked at Asn-181. One can recognise a Fibrinogen C-terminal domain in the interval 183–405 (THLHRPPRDC…ATTLLIQPME (223 aa)). Cys-192 and Cys-220 are oxidised to a cystine. N-linked (GlcNAc...) asparagine glycans are attached at residues Asn-236 and Asn-242. Residues Cys-345 and Cys-358 are joined by a disulfide bond.

Homooligomer; disulfide-linked via Cys residues in the N-terminal part of the protein. The homooligomer undergoes proteolytic processing to release the ANGPTL4 C-terminal chain, which circulates as a monomer. The homooligomer unprocessed form is able to interact with the extracellular matrix. Post-translationally, N-glycosylated. Forms disulfide-linked dimers and tetramers. In terms of processing, cleaved into a smaller N-terminal chain and a larger chain that contains the fibrinogen C-terminal domain; both cleaved and uncleaved forms are detected in the extracellular space. The cleaved form is not present within the cell. In terms of tissue distribution, detected in liver and kidney. Predominantly expressed in adipose tissue and is strongly up-regulated by fasting in white adipose tissue and liver. More abundant in areas of lower flow stress in the inner curvature compared to the outer curvature regions of the aorta (at protein level).

It is found in the secreted. The protein resides in the extracellular space. The protein localises to the extracellular matrix. Mediates inactivation of the lipoprotein lipase LPL, and thereby plays a role in the regulation of triglyceride clearance from the blood serum and in lipid metabolism. May also play a role in regulating glucose homeostasis and insulin sensitivity. Inhibits proliferation, migration, and tubule formation of endothelial cells and reduces vascular leakage. Upon heterologous expression, inhibits the adhesion of endothelial cell to the extracellular matrix (ECM), and inhibits the reorganization of the actin cytoskeleton, formation of actin stress fibers and focal adhesions in endothelial cells that have adhered to ANGPTL4-containing ECM (in vitro). Depending on context, may modulate tumor-related angiogenesis. Its function is as follows. Mediates inactivation of the lipoprotein lipase LPL, and thereby plays an important role in the regulation of triglyceride clearance from the blood serum and in lipid metabolism. Has higher activity in LPL inactivation than the uncleaved protein. This is Angiopoietin-related protein 4 (Angptl4) from Mus musculus (Mouse).